Consider the following 948-residue polypeptide: UvrABC system protein A (948 aa).

Residue 33–40 (GLSGSGKS) participates in ATP binding. The segment at 252-279 (CPICGFSIGELEPRMFSFNSPFGACPTC) adopts a C4-type zinc-finger fold. 2 ABC transporter domains span residues 309-587 (WIPT…KKSL) and 607-935 (ASDR…KYLK). ATP is bound at residue 639 to 646 (GVSGSGKS). Residues 738–764 (CEACKGDGIIKIEMHFLPDVYVPCEVC) form a C4-type zinc finger.

This sequence belongs to the ABC transporter superfamily. UvrA family. As to quaternary structure, forms a heterotetramer with UvrB during the search for lesions.

It is found in the cytoplasm. Its function is as follows. The UvrABC repair system catalyzes the recognition and processing of DNA lesions. UvrA is an ATPase and a DNA-binding protein. A damage recognition complex composed of 2 UvrA and 2 UvrB subunits scans DNA for abnormalities. When the presence of a lesion has been verified by UvrB, the UvrA molecules dissociate. The chain is UvrABC system protein A from Staphylococcus aureus (strain N315).